Here is a 226-residue protein sequence, read N- to C-terminus: ATP-dependent dethiobiotin synthetase BioD (226 aa).

A Mg(2+)-binding site is contributed by T19. Residue K40 is part of the active site. Mg(2+) contacts are provided by D53 and E114. ATP-binding positions include D53, 114–117 (EGAG), and 174–175 (NR).

Belongs to the dethiobiotin synthetase family. In terms of assembly, homodimer. Mg(2+) serves as cofactor.

The protein localises to the cytoplasm. The catalysed reaction is (7R,8S)-7,8-diammoniononanoate + CO2 + ATP = (4R,5S)-dethiobiotin + ADP + phosphate + 3 H(+). Its pathway is cofactor biosynthesis; biotin biosynthesis; biotin from 7,8-diaminononanoate: step 1/2. Functionally, catalyzes a mechanistically unusual reaction, the ATP-dependent insertion of CO2 between the N7 and N8 nitrogen atoms of 7,8-diaminopelargonic acid (DAPA, also called 7,8-diammoniononanoate) to form a ureido ring. In Nitrosospira multiformis (strain ATCC 25196 / NCIMB 11849 / C 71), this protein is ATP-dependent dethiobiotin synthetase BioD.